Reading from the N-terminus, the 198-residue chain is COMM domain-containing protein 9 (198 aa).

Position 2 is an N-acetylalanine (alanine 2). The COMM domain maps to 122 to 196; that stretch reads RLVDLDWRVD…RIRDQLSAVA (75 aa).

This sequence belongs to the COMM domain-containing protein 9 family. Component of the commander complex consisting of the CCC subcomplex and the retriever subcomplex. Component of the CCC (COMMD/CCDC22/CCDC93) subcomplex consisting of COMMD1, COMMD2, COMMD3, COMMD4, COMMD5, COMMD6, COMMD7, COMMD8, COMMD9, COMMD10, CCDC22 and CCDC93; within the complex forms a heterodimer with COMMD7. Interacts with RELB and NFKB1/p105. Interacts with CCDC22, CCDC93, SCNN1B, CUL1. Ubiquitous.

The protein localises to the nucleus. Its subcellular location is the cytoplasmic vesicle. Scaffold protein in the commander complex that is essential for endosomal recycling of transmembrane cargos; the commander complex is composed of the CCC subcomplex and the retriever subcomplex. May modulate activity of cullin-RING E3 ubiquitin ligase (CRL) complexes. May down-regulate activation of NF-kappa-B. Modulates Na(+) transport in epithelial cells by regulation of apical cell surface expression of amiloride-sensitive sodium channel (ENaC) subunits. This is COMM domain-containing protein 9 (COMMD9) from Homo sapiens (Human).